The chain runs to 549 residues: Eukaryotic translation initiation factor 3 subunit D-2 (549 aa).

Residues 107–157 form a disordered region; sequence ARVKGRSGRGPGMLGVAGSMAGGGTTSGSTKYGKGRESRRNQGRRFARNAP. The span at 114–132 shows a compositional bias: gly residues; sequence GRGPGMLGVAGSMAGGGTT. Residues 288-302 are RNA gate; sequence QFDLLTVNETSLEPP. A disordered region spans residues 527–549; the sequence is NSFDSDAEDEENSSEPFANSLDN. Acidic residues predominate over residues 529–539; the sequence is FDSDAEDEENS.

Belongs to the eIF-3 subunit D family. Component of the eukaryotic translation initiation factor 3 (eIF-3) complex. The eIF-3 complex interacts with pix.

It is found in the cytoplasm. Its function is as follows. mRNA cap-binding component of the eukaryotic translation initiation factor 3 (eIF-3) complex, which is involved in protein synthesis of a specialized repertoire of mRNAs and, together with other initiation factors, stimulates binding of mRNA and methionyl-tRNAi to the 40S ribosome. The eIF-3 complex specifically targets and initiates translation of a subset of mRNAs involved in cell proliferation. In the eIF-3 complex, eif3d specifically recognizes and binds the 7-methylguanosine cap of a subset of mRNAs. The sequence is that of Eukaryotic translation initiation factor 3 subunit D-2 from Drosophila ananassae (Fruit fly).